The following is a 165-amino-acid chain: Coronafacic acid dehydratase (165 aa).

H62 is a catalytic residue.

This sequence belongs to the thioester dehydratase family.

Its pathway is phytotoxin biosynthesis; coronatine biosynthesis. In Pseudomonas savastanoi pv. glycinea (Pseudomonas syringae pv. glycinea), this protein is Coronafacic acid dehydratase (cfa2).